Here is a 419-residue protein sequence, read N- to C-terminus: CinA-like protein (419 aa).

This sequence belongs to the CinA family.

The polypeptide is CinA-like protein (Leptospira borgpetersenii serovar Hardjo-bovis (strain JB197)).